Consider the following 290-residue polypeptide: Serine protease 27 (290 aa).

Residues 1–22 (MRRPAAVPLLLLLCFGSQRAKA) form the signal peptide. The propeptide at 23–34 (ATACGRPRMLNR) is activation peptide. A Peptidase S1 domain is found at 35–277 (MVGGQDTQEG…HHNWIHRIIP (243 aa)). Residue Asn-55 is glycosylated (N-linked (GlcNAc...) asparagine). A disulfide bridge connects residues Cys-60 and Cys-76. His-75 serves as the catalytic Charge relay system. An N-linked (GlcNAc...) asparagine glycan is attached at Asn-79. Asp-124 serves as the catalytic Charge relay system. 3 disulfide bridges follow: Cys-158–Cys-235, Cys-191–Cys-214, and Cys-225–Cys-253. The active-site Charge relay system is Ser-229.

Belongs to the peptidase S1 family. Post-translationally, N-glycosylated. In terms of tissue distribution, expressed predominantly in the pancreas.

Its subcellular location is the secreted. This is Serine protease 27 (PRSS27) from Homo sapiens (Human).